Consider the following 499-residue polypeptide: MKEEIDAPVSTDASGTDLENARDQPSGEKPTAVDIYLVEWDGPNDPELPMNFPLWKKSLITCIFSTLTIWVTFSSSVFSAAAGITSKEFHVSVEVMTLGTSLTVLGFTVGPLVWGPMSELYGRLKPLYIGYAIFIIFQVPVAVAQNLETLMLARFFLGFFGTSALAIIPGALADFWGPVERAIAISLFSAATFVGPIFGPIIGGFIVDSSLGWRWTAWITMIPASFFGIIAFLTLPETYHPVLLQRRASRLRKETRIWAYHSRLDENTPTFGEILTKYLFRPIQMLFLEPILVCMTIYISLIYGILYLFFVAYPIAFREVRNWKSLGIAALPFLGILVGVLMGCLLVTIATRLWYAPKLQNGSVVPEDRLPPMIVAAILLPIGLFWFGWTSSPSISWAPQAIAGAPIGMGILMIWMQGLNYLIDVYLVVANSAMSANTLIRSAVGAAFPLFATAMYHKLGVDWATSLLGFLSIAMIPIPVIFYFYGAKIRALSRFSPKW.

The interval 1–29 (MKEEIDAPVSTDASGTDLENARDQPSGEK) is disordered. The next 8 helical transmembrane spans lie at 58–78 (SLIT…SSVF), 95–115 (VMTL…LVWG), 124–144 (LKPL…VAVA), 155–175 (FFLG…LADF), 187–207 (LFSA…GFIV), 215–235 (WTAW…FLTL), 291–311 (ILVC…LFFV), and 327–347 (GIAA…CLLV). Residue N361 is glycosylated (N-linked (GlcNAc...) asparagine). Helical transmembrane passes span 370–390 (LPPM…FGWT), 395–415 (ISWA…LMIW), 443–463 (AVGA…GVDW), and 467–487 (LLGF…FYGA).

Belongs to the major facilitator superfamily. CAR1 family.

It localises to the membrane. MFS transporter; part of the gene cluster that mediates the biosynthesis the mycotoxin citrinin, a hepato-nephrotoxic compound to humans due to inhibition of respiration complex III. This is Citrinin biosynthesis cluster MFS transporter mrr1 from Monascus ruber (Mold).